The primary structure comprises 404 residues: Zinc transporter 10 (404 aa).

An N-terminal signal peptide occupies residues 1–22 (MESSSSSSYIPFIRQIAASVSA). The Extracellular portion of the chain corresponds to 23-49 (ASCDAVVGGGGDKDEECRDEAAALRLK). The chain crosses the membrane as a helical span at residues 50–70 (MVAVAAILIAGAAGVAIPLVG). Over 71 to 86 (RRRRGGGGGGGGGASS) the chain is Cytoplasmic. Residues 87-107 (GGLFVLAKAFAAGVILATGFV) traverse the membrane as a helical segment. At 108 to 129 (HMLHDAEHALSNPCLPHSPWRR) the chain is on the extracellular side. Residues 130–150 (FPFPGFVAMLAALATLVVDFV) form a helical membrane-spanning segment. The Cytoplasmic segment spans residues 151 to 248 (GTHFYERKHR…GHEEGPSARH (98 aa)). The helical transmembrane segment at 249–269 (VVVSQILELGIVSHSVIIGLS) threads the bilayer. Residues 270-280 (LGVSQSPCTIK) lie on the Extracellular side of the membrane. A helical transmembrane segment spans residues 281–301 (PLVAALSFHQFFEGFALGGCI). Residues 302-311 (SEAQLKNFSA) are Cytoplasmic-facing. Residues 312–332 (FLMAFFFAITTPAGITVGAAV) traverse the membrane as a helical segment. Residues 333–343 (ASFYNPNSPRA) are Extracellular-facing. The chain crosses the membrane as a helical span at residues 344 to 364 (LVVEGILDSMSAGILIYMALV). Residues 365-383 (DLIAADFLSRKMSCNPRLQ) lie on the Cytoplasmic side of the membrane. Residues 384–404 (VGSYIALFLGAMAMAALALWA) traverse the membrane as a helical segment.

This sequence belongs to the ZIP transporter (TC 2.A.5) family.

Its subcellular location is the cell membrane. Zinc transporter that may be involved in zinc uptake from the rhizosphere. The polypeptide is Zinc transporter 10 (ZIP10) (Oryza sativa subsp. japonica (Rice)).